Consider the following 297-residue polypeptide: Phosphatidylserine decarboxylase proenzyme (297 aa).

Catalysis depends on charge relay system; for autoendoproteolytic cleavage activity residues D100, H157, and S263. S263 (schiff-base intermediate with substrate; via pyruvic acid; for decarboxylase activity) is an active-site residue. A Pyruvic acid (Ser); by autocatalysis modification is found at S263.

The protein belongs to the phosphatidylserine decarboxylase family. PSD-B subfamily. Prokaryotic type I sub-subfamily. As to quaternary structure, heterodimer of a large membrane-associated beta subunit and a small pyruvoyl-containing alpha subunit. It depends on pyruvate as a cofactor. Post-translationally, is synthesized initially as an inactive proenzyme. Formation of the active enzyme involves a self-maturation process in which the active site pyruvoyl group is generated from an internal serine residue via an autocatalytic post-translational modification. Two non-identical subunits are generated from the proenzyme in this reaction, and the pyruvate is formed at the N-terminus of the alpha chain, which is derived from the carboxyl end of the proenzyme. The autoendoproteolytic cleavage occurs by a canonical serine protease mechanism, in which the side chain hydroxyl group of the serine supplies its oxygen atom to form the C-terminus of the beta chain, while the remainder of the serine residue undergoes an oxidative deamination to produce ammonia and the pyruvoyl prosthetic group on the alpha chain. During this reaction, the Ser that is part of the protease active site of the proenzyme becomes the pyruvoyl prosthetic group, which constitutes an essential element of the active site of the mature decarboxylase.

It is found in the cell membrane. The enzyme catalyses a 1,2-diacyl-sn-glycero-3-phospho-L-serine + H(+) = a 1,2-diacyl-sn-glycero-3-phosphoethanolamine + CO2. It functions in the pathway phospholipid metabolism; phosphatidylethanolamine biosynthesis; phosphatidylethanolamine from CDP-diacylglycerol: step 2/2. In terms of biological role, catalyzes the formation of phosphatidylethanolamine (PtdEtn) from phosphatidylserine (PtdSer). This is Phosphatidylserine decarboxylase proenzyme from Actinobacillus pleuropneumoniae serotype 5b (strain L20).